The chain runs to 211 residues: LexA repressor (211 aa).

The segment at residues 27–47 (QTEIARAFGFKGVRAVQHHLD) is a DNA-binding region (H-T-H motif). Residues Ser-131 and Lys-168 each act as for autocatalytic cleavage activity in the active site.

The protein belongs to the peptidase S24 family. In terms of assembly, homodimer.

The enzyme catalyses Hydrolysis of Ala-|-Gly bond in repressor LexA.. Functionally, represses a number of genes involved in the response to DNA damage (SOS response), including recA and lexA. In the presence of single-stranded DNA, RecA interacts with LexA causing an autocatalytic cleavage which disrupts the DNA-binding part of LexA, leading to derepression of the SOS regulon and eventually DNA repair. The polypeptide is LexA repressor (Xylella fastidiosa (strain M12)).